We begin with the raw amino-acid sequence, 500 residues long: Aspartyl/glutamyl-tRNA(Asn/Gln) amidotransferase subunit B (500 aa).

The protein belongs to the GatB/GatE family. GatB subfamily. In terms of assembly, heterotrimer of A, B and C subunits.

It catalyses the reaction L-glutamyl-tRNA(Gln) + L-glutamine + ATP + H2O = L-glutaminyl-tRNA(Gln) + L-glutamate + ADP + phosphate + H(+). The catalysed reaction is L-aspartyl-tRNA(Asn) + L-glutamine + ATP + H2O = L-asparaginyl-tRNA(Asn) + L-glutamate + ADP + phosphate + 2 H(+). Functionally, allows the formation of correctly charged Asn-tRNA(Asn) or Gln-tRNA(Gln) through the transamidation of misacylated Asp-tRNA(Asn) or Glu-tRNA(Gln) in organisms which lack either or both of asparaginyl-tRNA or glutaminyl-tRNA synthetases. The reaction takes place in the presence of glutamine and ATP through an activated phospho-Asp-tRNA(Asn) or phospho-Glu-tRNA(Gln). In Brucella ovis (strain ATCC 25840 / 63/290 / NCTC 10512), this protein is Aspartyl/glutamyl-tRNA(Asn/Gln) amidotransferase subunit B.